A 286-amino-acid polypeptide reads, in one-letter code: 4-diphosphocytidyl-2-C-methyl-D-erythritol kinase (286 aa).

K11 is an active-site residue. ATP is bound at residue P94–S104. The active site involves D136.

The protein belongs to the GHMP kinase family. IspE subfamily.

The enzyme catalyses 4-CDP-2-C-methyl-D-erythritol + ATP = 4-CDP-2-C-methyl-D-erythritol 2-phosphate + ADP + H(+). The protein operates within isoprenoid biosynthesis; isopentenyl diphosphate biosynthesis via DXP pathway; isopentenyl diphosphate from 1-deoxy-D-xylulose 5-phosphate: step 3/6. Catalyzes the phosphorylation of the position 2 hydroxy group of 4-diphosphocytidyl-2C-methyl-D-erythritol. This chain is 4-diphosphocytidyl-2-C-methyl-D-erythritol kinase, found in Pseudomonas putida (strain GB-1).